We begin with the raw amino-acid sequence, 810 residues long: Myoneurin (810 aa).

The BTB domain maps to 24-91 (CDCTVSIGQA…IYTGDLNMDR (68 aa)). 2 disordered regions span residues 122–146 (NVGS…DYEP) and 169–466 (VSMD…VKPV). The segment covering 173–183 (EAQSSSEQTPQ) has biased composition (polar residues). 2 stretches are compositionally biased toward basic residues: residues 185-194 (VGKRGRKPKT) and 211-225 (GRGR…RPRV). Residues 229–238 (SSDSTDQSPA) show a composition bias toward polar residues. A compositionally biased stretch (low complexity) spans 243-253 (SPNGSSTSRGS). A DNA-binding region (a.T hook 1) is located at residues 254–266 (GRPRGRPRVRPLS). The span at 270 to 308 (EDPRNVEDDPAANKDQEVEKGNEEQKKETGEKDDGKNDT) shows a compositional bias: basic and acidic residues. The segment at residues 318–330 (KRGRGRPRIKPVS) is a DNA-binding region (a.T hook 2). Over residues 331-346 (TEDQTTNSENVTTNAE) the composition is skewed to polar residues. Residues 350–361 (EPAKTKDSEGTG) are compositionally biased toward basic and acidic residues. A DNA-binding region (a.T hook 3) is located at residues 361–373 (GRKRGRPRSKPVS). Over residues 386 to 396 (SGEEAGEETSQ) the composition is skewed to acidic residues. The segment covering 419–428 (ISKRKRILSR) has biased composition (basic residues). Positions 428-432 (RKLKE) match the Nuclear localization signal motif. Acidic residues predominate over residues 435–460 (AGDEEEEEEEEMDDEFENDNEDWAGE). C2H2-type zinc fingers lie at residues 472 to 494 (PICN…MRIH), 500 to 522 (YQCT…MRIH), 528 to 551 (FTCT…RMHH), 557 to 579 (YKCE…IRKH), 585 to 607 (YECG…KRRH), 613 to 635 (YICD…NRKH), and 641 to 663 (YICL…MDVH).

It belongs to the krueppel C2H2-type zinc-finger protein family.

It localises to the nucleus. This is Myoneurin (mynn) from Danio rerio (Zebrafish).